The primary structure comprises 111 residues: Disintegrin Eo1 subunit 1 (111 aa).

Residues methionine 1–serine 20 form the signal peptide. The propeptide occupies isoleucine 21–alanine 46. The region spanning glycine 26 to aspartate 111 is the Disintegrin domain. 4 cysteine pairs are disulfide-bonded: cysteine 53–cysteine 76, cysteine 67–cysteine 73, cysteine 72–cysteine 97, and cysteine 85–cysteine 104. The short motif at tryptophan 89–aspartate 91 is the Cell attachment site; atypical (WGD) element. A propeptide spanning residues lysine 110–aspartate 111 is cleaved from the precursor.

It belongs to the disintegrin family. Dimeric disintegrin subfamily. As to quaternary structure, heterodimer; disulfide-linked. Expressed by the venom gland.

It localises to the secreted. Poor inhibitor of platelet aggregation. The disintegrin inhibits the adhesion of cells expressing the RGD-dependent integrin alpha-5/beta-1 (ITGA5/ITGB1) to immobilized fibronectin. Inhibition on alpha-IIb/beta-3 (ITGA2B/ITGB3) is low. In Echis ocellatus (Ocellated saw-scaled viper), this protein is Disintegrin Eo1 subunit 1.